A 91-amino-acid chain; its full sequence is Signal recognition particle 19 kDa protein (91 aa).

It belongs to the SRP19 family. As to quaternary structure, part of the signal recognition particle protein translocation system, which is composed of SRP and FtsY. Archaeal SRP consists of a 7S RNA molecule of 300 nucleotides and two protein subunits: SRP54 and SRP19.

It localises to the cytoplasm. Involved in targeting and insertion of nascent membrane proteins into the cytoplasmic membrane. Binds directly to 7S RNA and mediates binding of the 54 kDa subunit of the SRP. This Methanothermobacter thermautotrophicus (strain ATCC 29096 / DSM 1053 / JCM 10044 / NBRC 100330 / Delta H) (Methanobacterium thermoautotrophicum) protein is Signal recognition particle 19 kDa protein.